The primary structure comprises 276 residues: NAD kinase (276 aa).

Residue aspartate 66 is the Proton acceptor of the active site. NAD(+)-binding positions include 66–67, 139–140, aspartate 168, 179–184, and glutamine 234; these read DG, ND, and TAYNIS.

Belongs to the NAD kinase family. A divalent metal cation is required as a cofactor.

The protein localises to the cytoplasm. It catalyses the reaction NAD(+) + ATP = ADP + NADP(+) + H(+). In terms of biological role, involved in the regulation of the intracellular balance of NAD and NADP, and is a key enzyme in the biosynthesis of NADP. Catalyzes specifically the phosphorylation on 2'-hydroxyl of the adenosine moiety of NAD to yield NADP. The chain is NAD kinase from Campylobacter lari (strain RM2100 / D67 / ATCC BAA-1060).